A 150-amino-acid polypeptide reads, in one-letter code: Large ribosomal subunit protein uL23m (150 aa).

Belongs to the universal ribosomal protein uL23 family. As to quaternary structure, component of the mitochondrial ribosome large subunit (39S) which comprises a 16S rRNA and about 50 distinct proteins.

It localises to the mitochondrion. The polypeptide is Large ribosomal subunit protein uL23m (mRpL23) (Drosophila melanogaster (Fruit fly)).